The following is a 119-amino-acid chain: UPF0292 protein TV1259 (119 aa).

Positions 11 to 93 constitute a Toprim domain; the sequence is SIPIIVEGRN…YVDLYLWNFI (83 aa). 3 residues coordinate Mg(2+): Glu17, Asp62, and Asp64.

The protein belongs to the UPF0292 family. The cofactor is Mg(2+).

The polypeptide is UPF0292 protein TV1259 (Thermoplasma volcanium (strain ATCC 51530 / DSM 4299 / JCM 9571 / NBRC 15438 / GSS1)).